The following is a 94-amino-acid chain: Integration host factor subunit beta (94 aa).

The protein belongs to the bacterial histone-like protein family. As to quaternary structure, heterodimer of an alpha and a beta chain.

In terms of biological role, this protein is one of the two subunits of integration host factor, a specific DNA-binding protein that functions in genetic recombination as well as in transcriptional and translational control. This is Integration host factor subunit beta from Photorhabdus laumondii subsp. laumondii (strain DSM 15139 / CIP 105565 / TT01) (Photorhabdus luminescens subsp. laumondii).